The chain runs to 217 residues: Adenylate kinase (217 aa).

Residue 10-15 (GAGKGT) coordinates ATP. The NMP stretch occupies residues 30 to 59 (STGDMLRAAVKAGTEMGLAAKKVMDAGGLV). AMP-binding positions include Thr31, Arg36, 57–59 (GLV), 85–88 (GFPR), and Gln92. The segment at 122–159 (GRRSHPASGRTYHVKFNPPKVDGVDDVTGEPLVQRDDD) is LID. Residues Arg123 and 132–133 (TY) contribute to the ATP site. Residues Arg156 and Arg167 each coordinate AMP. Gly203 is an ATP binding site.

The protein belongs to the adenylate kinase family. In terms of assembly, monomer.

It is found in the cytoplasm. The catalysed reaction is AMP + ATP = 2 ADP. Its pathway is purine metabolism; AMP biosynthesis via salvage pathway; AMP from ADP: step 1/1. Functionally, catalyzes the reversible transfer of the terminal phosphate group between ATP and AMP. Plays an important role in cellular energy homeostasis and in adenine nucleotide metabolism. This Leptothrix cholodnii (strain ATCC 51168 / LMG 8142 / SP-6) (Leptothrix discophora (strain SP-6)) protein is Adenylate kinase.